A 128-amino-acid polypeptide reads, in one-letter code: Ribonuclease P protein component (128 aa).

This sequence belongs to the RnpA family. Consists of a catalytic RNA component (M1 or rnpB) and a protein subunit.

The enzyme catalyses Endonucleolytic cleavage of RNA, removing 5'-extranucleotides from tRNA precursor.. RNaseP catalyzes the removal of the 5'-leader sequence from pre-tRNA to produce the mature 5'-terminus. It can also cleave other RNA substrates such as 4.5S RNA. The protein component plays an auxiliary but essential role in vivo by binding to the 5'-leader sequence and broadening the substrate specificity of the ribozyme. The sequence is that of Ribonuclease P protein component from Chromohalobacter salexigens (strain ATCC BAA-138 / DSM 3043 / CIP 106854 / NCIMB 13768 / 1H11).